Consider the following 178-residue polypeptide: MSRIGRQPISVPKGVEVTIDGKDVKVKGPKGELKHTVPPSITVTLEDGQVKVSRADDRPQTRSLHGLTRSLIANLIEGTSKGYTKTLEISGVGYRVQAKGRNLEFSLGYSHPIVVEPPEGITFRVEKPTLLHVEGIDKQKVGQVAADIRSLRKPDPYKAKGIRYQGERIRRKAGKAGK.

The protein belongs to the universal ribosomal protein uL6 family. As to quaternary structure, part of the 50S ribosomal subunit.

Its function is as follows. This protein binds to the 23S rRNA, and is important in its secondary structure. It is located near the subunit interface in the base of the L7/L12 stalk, and near the tRNA binding site of the peptidyltransferase center. The polypeptide is Large ribosomal subunit protein uL6 (Thermobifida fusca (strain YX)).